A 312-amino-acid chain; its full sequence is Putative movement protein (312 aa).

The tract at residues 266–293 (RNHLSLQPPPLRVARKDSEESSSTSVPE) is disordered. A coiled-coil region spans residues 278-307 (VARKDSEESSSTSVPEIENLTKQVKDISSY).

It belongs to the caulimoviridae movement protein family. Homotrimer, through the coiled-coil domain. Interacts with VAP.

Its subcellular location is the host cell junction. It localises to the host plasmodesma. Functionally, transports viral genome to neighboring plant cells directly through plasmosdesmata, without any budding. The movement protein allows efficient cell to cell propagation, by bypassing the host cell wall barrier. Acts by forming tubules structures that increase the size exclusion limit (SEL) of plasmodesmata, thereby allowing viral ribonucleocapsids to spread directly to neighboring cells. In Cestrum parqui (CmYLCV), this protein is Putative movement protein.